A 228-amino-acid polypeptide reads, in one-letter code: Geranylgeranylglyceryl phosphate synthase (228 aa).

Lys-11 is a binding site for sn-glycerol 1-phosphate. 2 residues coordinate Mg(2+): Asp-13 and Thr-39. Residues 159 to 164, Gly-189, and 209 to 210 contribute to the sn-glycerol 1-phosphate site; these read YIEYSG and GN.

This sequence belongs to the GGGP/HepGP synthase family. Group I subfamily. Mg(2+) is required as a cofactor.

It is found in the cytoplasm. The catalysed reaction is sn-glycerol 1-phosphate + (2E,6E,10E)-geranylgeranyl diphosphate = sn-3-O-(geranylgeranyl)glycerol 1-phosphate + diphosphate. It participates in membrane lipid metabolism; glycerophospholipid metabolism. Prenyltransferase that catalyzes the transfer of the geranylgeranyl moiety of geranylgeranyl diphosphate (GGPP) to the C3 hydroxyl of sn-glycerol-1-phosphate (G1P). This reaction is the first ether-bond-formation step in the biosynthesis of archaeal membrane lipids. This chain is Geranylgeranylglyceryl phosphate synthase, found in Methanoregula boonei (strain DSM 21154 / JCM 14090 / 6A8).